The sequence spans 388 residues: Deoxyuridine 5'-triphosphate nucleotidohydrolase (388 aa).

The segment covering 77 to 88 (EEKYDKEQHPGE) has biased composition (basic and acidic residues). Disordered regions lie at residues 77-96 (EEKYDKEQHPGEDEASSPLP) and 336-388 (THTP…PRHP). Residues 351–363 (VDDDVDETEEDEK) are compositionally biased toward acidic residues.

It belongs to the dUTPase family. Mg(2+) serves as cofactor.

It carries out the reaction dUTP + H2O = dUMP + diphosphate + H(+). The protein operates within pyrimidine metabolism; dUMP biosynthesis; dUMP from dCTP (dUTP route): step 2/2. Its function is as follows. Involved in nucleotide metabolism: produces dUMP, the immediate precursor of thymidine nucleotides and decreases the intracellular concentration of dUTP to avoid uracil incorporation into viral DNA. In Homo sapiens (Human), this protein is Deoxyuridine 5'-triphosphate nucleotidohydrolase.